The chain runs to 630 residues: 1-deoxy-D-xylulose-5-phosphate synthase (630 aa).

Thiamine diphosphate contacts are provided by residues His80 and 121–123 (GHS). Asp152 contacts Mg(2+). Residues 153–154 (GA), Asn181, Tyr288, and Glu370 contribute to the thiamine diphosphate site. Asn181 lines the Mg(2+) pocket.

It belongs to the transketolase family. DXPS subfamily. As to quaternary structure, homodimer. Mg(2+) serves as cofactor. Thiamine diphosphate is required as a cofactor.

It catalyses the reaction D-glyceraldehyde 3-phosphate + pyruvate + H(+) = 1-deoxy-D-xylulose 5-phosphate + CO2. It participates in metabolic intermediate biosynthesis; 1-deoxy-D-xylulose 5-phosphate biosynthesis; 1-deoxy-D-xylulose 5-phosphate from D-glyceraldehyde 3-phosphate and pyruvate: step 1/1. In terms of biological role, catalyzes the acyloin condensation reaction between C atoms 2 and 3 of pyruvate and glyceraldehyde 3-phosphate to yield 1-deoxy-D-xylulose-5-phosphate (DXP). This is 1-deoxy-D-xylulose-5-phosphate synthase from Colwellia psychrerythraea (strain 34H / ATCC BAA-681) (Vibrio psychroerythus).